The sequence spans 1023 residues: Solute carrier family 12 member 3 (1023 aa).

The Cytoplasmic segment spans residues 1-134 (MELPGDGVHL…EPPPEPPRFG (134 aa)). The segment at 91–131 (DPEQDDFKPPMYEETAGERMGGGDSSEEEEEEHKEPPPEPP) is disordered. The chain crosses the membrane as a discontinuously helical span at residues 135–164 (WVQGVMIRCMLNIWGVILYLRLPWITAQAG). Na(+)-binding residues include Leu145 and Trp148. A helical transmembrane segment spans residues 165-186 (IGLTWVIILLSSFITGITGLST). Residues 187–217 (SAIATNGKVKGGGTYFLISRSLGPELGGSIG) are Cytoplasmic-facing. A helical membrane pass occupies residues 218 to 240 (LIFAFANAVAVAMHTVGFAETVT). Residues 241-252 (DLMRENGVVMVD) lie on the Extracellular side of the membrane. Helical transmembrane passes span 253–277 (PIND…AGME) and 278–300 (WESK…YIVG). Over 301–335 (TIIPASPQKQAKGFFSYKAEIFAANFVPGWRGKEG) the chain is Extracellular. A discontinuously helical membrane pass occupies residues 336-357 (SFFGMFSIFFPSATGILAGANI). Chloride-binding residues include Gly350, Ile351, and Leu352. Topologically, residues 358 to 368 (SGDLKDPTVAI) are cytoplasmic. The chain crosses the membrane as a helical span at residues 369 to 390 (PRGTLMAIFWTTISYLIISATI). Topologically, residues 391-452 (GACVVRDASG…YQSMSLVSAF (62 aa)) are extracellular. Residues Asn403 and Asn414 are each glycosylated (N-linked (GlcNAc...) asparagine). 2 disulfide bridges follow: Cys415–Cys420 and Cys429–Cys435. N-linked (GlcNAc...) asparagine glycosylation is present at Asn432. The chain crosses the membrane as a helical span at residues 453 to 476 (APLISAGIFGATLSSALACLVSAP). The Na(+) site is built by Ala463, Ser466, and Ser467. Over 477–506 (KVFQCLCKDQLYPLIGFFGKGYGKNAEPLR) the chain is Cytoplasmic. Residues 507-521 (AYLLTYVIAVCFVLI) traverse the membrane as a helical segment. Residues 522–526 (AELNT) lie on the Extracellular side of the membrane. Residues 527–543 (IAPIISNFFLCSYALIN) form a helical membrane-spanning segment. Tyr539 contributes to the chloride binding site. Residues 544–566 (FSCFHASVTNSPGWRPSFRFYSK) lie on the Cytoplasmic side of the membrane. Helical transmembrane passes span 567 to 586 (WLSL…LTWW) and 587 to 598 (AALIAFGVVFFL). Over 599 to 1023 (LGYTLYKKPA…QENVLTFYCQ (425 aa)) the chain is Cytoplasmic. A scissor helix region spans residues 614–629 (SVQASSYSMALNQCVG). Positions 647, 654, 676, 733, and 772 each coordinate ATP.

The protein belongs to the SLC12A transporter family. As to quaternary structure, homodimer; adopts a domain-swap conformation at the scissor helices connecting the transmembrane domain and C-terminal domain. As to expression, expressed in urinary bladder, intestine, ovary, skeletal muscle, eye, brain, and kidney.

It is found in the cell membrane. It carries out the reaction chloride(out) + Na(+)(out) = chloride(in) + Na(+)(in). Inhibited by thiazide-type diuretics including polythiazide, metolazone, cyclothiazide, hydrochlorothiazide and chlorthalidone. Thiazide drugs, specifically inhibit SLC12A3/NCC transporter activity by competing with chloride for binding. Electroneutral sodium and chloride ion cotransporter, with a coupling ratio 1 Na(+):1 Cl(-). Mediates sodium and chloride reabsorption. In Pseudopleuronectes americanus (Winter flounder), this protein is Solute carrier family 12 member 3 (slc12a3).